The sequence spans 135 residues: Helix-loop-helix protein 2 (135 aa).

The tract at residues 1-81 (MMLSPDQAAD…RRATAKYRSA (81 aa)) is disordered. Positions 10 to 21 (DSDHPSSTHSDP) are enriched in basic and acidic residues. Residues 68-81 (KRRRRRATAKYRSA) show a composition bias toward basic residues. A bHLH domain is found at 77 to 129 (KYRSAHATRERIRVEAFNLAFAELRKLLPTLPPDKKLSKIEILRLAICYISYL).

In terms of assembly, homodimer. Interacts and may form heterodimers with STAT3. As to expression, expressed in developing neurons. Transiently expressed in the cerebellum during postnatal development, exclusively in the premigratory zone of the external granule layer where postmitotic neurons undergo initial stages of neuronal differentiation. Expression is not detected in mature neurons. Expressed in the anterior lobe of the adult pituitary.

It localises to the nucleus. Its function is as follows. Transcription factor which binds the E box motif 5'-CA[TC][AG]TG-3'. Involved in regulating energy expenditure, body mass, voluntary physical activity, mating behavior and reproductive longevity, acting through the hypothalamic-pituitary-gonadal axis. Acts as a transcriptional activator of target genes, including Ndn, Pcsk1, Mc4r. Is also a transcriptional activator of KISS1. May act centrally to regulate function of both white and brown adipose tissue. Together with NHLH1, required to maintain migration and survival of cells in the anterior extramural migration stream (aes), which forms the precerebellar nuclei. Also, in concert with Nhlh1, may determine fate of gonadotropin releasing hormone-1 (GnRH-1) neurons. This is Helix-loop-helix protein 2 (Nhlh2) from Mus musculus (Mouse).